Here is a 328-residue protein sequence, read N- to C-terminus: Peroxidase 63 (328 aa).

Residues 1-27 (MAEQSQLKNLTIILLLLCLSFQSLSFA) form the signal peptide. 4 disulfides stabilise this stretch: Cys41-Cys122, Cys74-Cys79, Cys128-Cys324, and Cys207-Cys234. His72 serves as the catalytic Proton acceptor. Asp73, Gly78, Asp80, and Ser82 together coordinate Ca(2+). Pro170 contributes to the substrate binding site. Heme b is bound at residue His200. Ca(2+) is bound at residue Thr201. N-linked (GlcNAc...) asparagine glycans are attached at residues Asn217 and Asn218. Residues Asp248, Thr251, and Asp256 each contribute to the Ca(2+) site.

It belongs to the peroxidase family. Classical plant (class III) peroxidase subfamily. It depends on heme b as a cofactor. The cofactor is Ca(2+).

Its subcellular location is the secreted. The enzyme catalyses 2 a phenolic donor + H2O2 = 2 a phenolic radical donor + 2 H2O. In terms of biological role, removal of H(2)O(2), oxidation of toxic reductants, biosynthesis and degradation of lignin, suberization, auxin catabolism, response to environmental stresses such as wounding, pathogen attack and oxidative stress. These functions might be dependent on each isozyme/isoform in each plant tissue. In Arabidopsis thaliana (Mouse-ear cress), this protein is Peroxidase 63 (PER63).